The primary structure comprises 321 residues: Beta-ketoacyl-[acyl-carrier-protein] synthase III (321 aa).

Catalysis depends on residues cysteine 114 and histidine 248. Residues 249–253 (QANKR) form an ACP-binding region. Asparagine 278 is a catalytic residue.

This sequence belongs to the thiolase-like superfamily. FabH family. In terms of assembly, homodimer.

It is found in the cytoplasm. It carries out the reaction malonyl-[ACP] + acetyl-CoA + H(+) = 3-oxobutanoyl-[ACP] + CO2 + CoA. Its pathway is lipid metabolism; fatty acid biosynthesis. Catalyzes the condensation reaction of fatty acid synthesis by the addition to an acyl acceptor of two carbons from malonyl-ACP. Catalyzes the first condensation reaction which initiates fatty acid synthesis and may therefore play a role in governing the total rate of fatty acid production. Possesses both acetoacetyl-ACP synthase and acetyl transacylase activities. Its substrate specificity determines the biosynthesis of branched-chain and/or straight-chain of fatty acids. The polypeptide is Beta-ketoacyl-[acyl-carrier-protein] synthase III (Sphingopyxis alaskensis (strain DSM 13593 / LMG 18877 / RB2256) (Sphingomonas alaskensis)).